The primary structure comprises 148 residues: MRKLDKVDIQLVKILSQNSRLTYRELAELMNTTRQRIARRITKLKKLGVIKKFTIIPDLDKLGYMYAFVLVKLRVPSEVDAMISEISNVEYVKEIEKGVGRYNLIVRLLLPKDLKEAEGIINEFLQKIKNAESVEVVLISEIKKFEII.

Residues 4–65 form the HTH asnC-type domain; the sequence is LDKVDIQLVK…IPDLDKLGYM (62 aa). The H-T-H motif DNA-binding region spans 23 to 42; the sequence is YRELAELMNTTRQRIARRIT.

This is an uncharacterized protein from Pyrococcus abyssi (strain GE5 / Orsay).